Here is a 178-residue protein sequence, read N- to C-terminus: Photosystem I assembly protein Ycf4 (178 aa).

Helical transmembrane passes span 19 to 39 (FLVA…SLSS) and 61 to 81 (LVMG…WYVI).

The protein belongs to the Ycf4 family.

The protein localises to the cellular thylakoid membrane. In terms of biological role, seems to be required for the assembly of the photosystem I complex. The chain is Photosystem I assembly protein Ycf4 from Synechococcus sp. (strain CC9902).